The following is a 308-amino-acid chain: D-alanine--D-alanine ligase (308 aa).

An ATP-grasp domain is found at 104 to 301 (KQIWQGSDLP…FDELCVAILE (198 aa)). ATP is bound at residue 130–185 (IAELGLPVIIKPVHEGSSVGMSKVEKAEDFAAAIEKATQHDAVVMAEKWITGREFT). Mg(2+)-binding residues include aspartate 255, glutamate 268, and asparagine 270.

Belongs to the D-alanine--D-alanine ligase family. Mg(2+) is required as a cofactor. The cofactor is Mn(2+).

It is found in the cytoplasm. It carries out the reaction 2 D-alanine + ATP = D-alanyl-D-alanine + ADP + phosphate + H(+). Its pathway is cell wall biogenesis; peptidoglycan biosynthesis. In terms of biological role, cell wall formation. The protein is D-alanine--D-alanine ligase of Acinetobacter baumannii (strain ACICU).